The primary structure comprises 135 residues: Small ribosomal subunit protein uS11 (135 aa).

The protein belongs to the universal ribosomal protein uS11 family. Part of the 30S ribosomal subunit. Interacts with proteins S7 and S18. Binds to IF-3.

In terms of biological role, located on the platform of the 30S subunit, it bridges several disparate RNA helices of the 16S rRNA. Forms part of the Shine-Dalgarno cleft in the 70S ribosome. In Polynucleobacter asymbioticus (strain DSM 18221 / CIP 109841 / QLW-P1DMWA-1) (Polynucleobacter necessarius subsp. asymbioticus), this protein is Small ribosomal subunit protein uS11.